Reading from the N-terminus, the 89-residue chain is Phosphocarrier protein HPr (89 aa).

Residues 1–88 (MLEHELTVTN…ELFENRFNED (88 aa)) form the HPr domain. The active-site Pros-phosphohistidine intermediate is the His15. Ser46 carries the phosphoserine; by HPrK/P modification.

Belongs to the HPr family.

It localises to the cytoplasm. Its activity is regulated as follows. Phosphorylation on Ser-46 inhibits the phosphoryl transfer from enzyme I to HPr. General (non sugar-specific) component of the phosphoenolpyruvate-dependent sugar phosphotransferase system (sugar PTS). This major carbohydrate active-transport system catalyzes the phosphorylation of incoming sugar substrates concomitantly with their translocation across the cell membrane. The phosphoryl group from phosphoenolpyruvate (PEP) is transferred to the phosphoryl carrier protein HPr by enzyme I. Phospho-HPr then transfers it to the PTS EIIA domain. The polypeptide is Phosphocarrier protein HPr (ptsH) (Xylella fastidiosa (strain Temecula1 / ATCC 700964)).